We begin with the raw amino-acid sequence, 352 residues long: Glucose 1-dehydrogenase 1 (352 aa).

C35 contributes to the Zn(2+) binding site. T37 contributes to the substrate binding site. Positions 60 and 61 each coordinate Zn(2+). N83 is a substrate binding site. Zn(2+) contacts are provided by C87, C90, C93, and C101. Positions 108, 144, and 148 each coordinate substrate. Q144 lines the Zn(2+) pocket. NADP(+) contacts are provided by residues 182–185 (TGTI), 204–206 (NKR), 264–266 (FGF), 292–294 (LIN), and K341. Residue N294 participates in substrate binding.

It belongs to the zinc-containing alcohol dehydrogenase family. Glucose 1-dehydrogenase subfamily. Zn(2+) is required as a cofactor.

The catalysed reaction is D-glucose + NAD(+) = D-glucono-1,5-lactone + NADH + H(+). It catalyses the reaction D-glucose + NADP(+) = D-glucono-1,5-lactone + NADPH + H(+). Its function is as follows. Catalyzes the NAD(P)(+)-dependent oxidation of D-glucose to D-gluconate via gluconolactone. Can utilize both NAD(+) and NADP(+) as electron acceptor. Is involved in the degradation of glucose through a non-phosphorylative variant of the Entner-Doudoroff pathway. The chain is Glucose 1-dehydrogenase 1 from Picrophilus torridus (strain ATCC 700027 / DSM 9790 / JCM 10055 / NBRC 100828 / KAW 2/3).